Here is a 617-residue protein sequence, read N- to C-terminus: Dihydroxy-acid dehydratase (617 aa).

Asp81 is a Mg(2+) binding site. Cys122 contributes to the [2Fe-2S] cluster binding site. Residues Asp123 and Lys124 each coordinate Mg(2+). An N6-carboxylysine modification is found at Lys124. Cys197 serves as a coordination point for [2Fe-2S] cluster. Glu494 is a Mg(2+) binding site. Ser520 acts as the Proton acceptor in catalysis.

This sequence belongs to the IlvD/Edd family. As to quaternary structure, homodimer. The cofactor is [2Fe-2S] cluster. Mg(2+) serves as cofactor.

The catalysed reaction is (2R)-2,3-dihydroxy-3-methylbutanoate = 3-methyl-2-oxobutanoate + H2O. It catalyses the reaction (2R,3R)-2,3-dihydroxy-3-methylpentanoate = (S)-3-methyl-2-oxopentanoate + H2O. It functions in the pathway amino-acid biosynthesis; L-isoleucine biosynthesis; L-isoleucine from 2-oxobutanoate: step 3/4. It participates in amino-acid biosynthesis; L-valine biosynthesis; L-valine from pyruvate: step 3/4. Functions in the biosynthesis of branched-chain amino acids. Catalyzes the dehydration of (2R,3R)-2,3-dihydroxy-3-methylpentanoate (2,3-dihydroxy-3-methylvalerate) into 2-oxo-3-methylpentanoate (2-oxo-3-methylvalerate) and of (2R)-2,3-dihydroxy-3-methylbutanoate (2,3-dihydroxyisovalerate) into 2-oxo-3-methylbutanoate (2-oxoisovalerate), the penultimate precursor to L-isoleucine and L-valine, respectively. This Frankia casuarinae (strain DSM 45818 / CECT 9043 / HFP020203 / CcI3) protein is Dihydroxy-acid dehydratase.